Here is a 167-residue protein sequence, read N- to C-terminus: Lipoprotein signal peptidase (167 aa).

Helical transmembrane passes span 12–32 (WLWLAVLAFVLDQASKLAVVK), 68–88 (WQRWFFAVLAFAICGLLIHWL), and 99–119 (GIAYSLIIGGALGNVFDRLVL). Residues Asp-124 and Asp-142 contribute to the active site. A helical membrane pass occupies residues 137-157 (AFNLADSFIFIGAAMIVLDGF).

The protein belongs to the peptidase A8 family.

It is found in the cell inner membrane. It catalyses the reaction Release of signal peptides from bacterial membrane prolipoproteins. Hydrolyzes -Xaa-Yaa-Zaa-|-(S,diacylglyceryl)Cys-, in which Xaa is hydrophobic (preferably Leu), and Yaa (Ala or Ser) and Zaa (Gly or Ala) have small, neutral side chains.. The protein operates within protein modification; lipoprotein biosynthesis (signal peptide cleavage). Functionally, this protein specifically catalyzes the removal of signal peptides from prolipoproteins. This Aeromonas hydrophila subsp. hydrophila (strain ATCC 7966 / DSM 30187 / BCRC 13018 / CCUG 14551 / JCM 1027 / KCTC 2358 / NCIMB 9240 / NCTC 8049) protein is Lipoprotein signal peptidase.